We begin with the raw amino-acid sequence, 85 residues long: U4-theraphotoxin-Hhn1m (85 aa).

The N-terminal stretch at 1 to 22 is a signal peptide; that stretch reads MKVTLIAILTCAAVLVLHTTAA. A propeptide spanning residues 23-48 is cleaved from the precursor; that stretch reads EELEAESQLVEVGMPDTELAAVDEER. Disulfide bonds link cysteine 52/cysteine 66, cysteine 56/cysteine 77, and cysteine 71/cysteine 82.

This sequence belongs to the neurotoxin 12 (Hwtx-2) family. 02 (Hwtx-2) subfamily. Expressed by the venom gland.

The protein resides in the secreted. In terms of biological role, postsynaptic neurotoxin. This chain is U4-theraphotoxin-Hhn1m, found in Cyriopagopus hainanus (Chinese bird spider).